Reading from the N-terminus, the 101-residue chain is NAD(P)H-quinone oxidoreductase subunit 4L, chloroplastic (101 aa).

3 helical membrane passes run 2–22, 32–52, and 61–81; these read ILEH…YGLI, MCLE…SDFF, and IFCI…LAIV.

It belongs to the complex I subunit 4L family. NDH is composed of at least 16 different subunits, 5 of which are encoded in the nucleus.

It localises to the plastid. The protein resides in the chloroplast thylakoid membrane. It carries out the reaction a plastoquinone + NADH + (n+1) H(+)(in) = a plastoquinol + NAD(+) + n H(+)(out). The enzyme catalyses a plastoquinone + NADPH + (n+1) H(+)(in) = a plastoquinol + NADP(+) + n H(+)(out). Its function is as follows. NDH shuttles electrons from NAD(P)H:plastoquinone, via FMN and iron-sulfur (Fe-S) centers, to quinones in the photosynthetic chain and possibly in a chloroplast respiratory chain. The immediate electron acceptor for the enzyme in this species is believed to be plastoquinone. Couples the redox reaction to proton translocation, and thus conserves the redox energy in a proton gradient. This is NAD(P)H-quinone oxidoreductase subunit 4L, chloroplastic from Arabis hirsuta (Hairy rock-cress).